The sequence spans 230 residues: Cyclin-U2-2 (230 aa).

Belongs to the cyclin family. Cyclin U/P subfamily. In terms of assembly, interacts with CDKA-1. In terms of tissue distribution, expressed in roots and stems. Expressed in the shoot apex, leaf primordia and young leaves.

The polypeptide is Cyclin-U2-2 (CYCU2-2) (Arabidopsis thaliana (Mouse-ear cress)).